Reading from the N-terminus, the 341-residue chain is Barley B recombinant-like protein A (341 aa).

The span at 48-62 shows a compositional bias: basic residues; that stretch reads HQHQQHVPHHHHQPH. Disordered regions lie at residues 48–95 and 150–234; these read HQHQ…MNFA and MQQQ…RKNI. Over residues 68 to 77 the composition is skewed to low complexity; the sequence is GANGNANGGA. The segment covering 78-90 has biased composition (pro residues); sequence MPPPPATEAPPSM. Residues 190-211 show a composition bias toward basic residues; it reads PKKRQQGRQPKVPRAKKPKKSA.

Belongs to the BBR/BPC family.

Its subcellular location is the nucleus. In terms of biological role, transcriptional regulator that specifically binds to GA-rich elements (GAGA-repeats) present in regulatory sequences of genes involved in developmental processes. This chain is Barley B recombinant-like protein A, found in Oryza sativa subsp. japonica (Rice).